The sequence spans 217 residues: MAIVSSARESLSHAMNNRFLPNLEYLLQGSILDSAVEHLMHRLKGLCDNVDTSPEPFHDLEVCMSLRQPNANQPLLLRVRRALGRDAPFQMRYLGNPEVDLRRPTLVRSCMDCACTNGILEFLTEMGFRLEFEYIAKGYMFRKGRMKITVSKLIKIVPGKQQDMANEPISQSYIVELSVVAPTGQENVGEEMRVFAEQLKPLVQLEKIDYKRLGGMP.

Belongs to the Mediator complex subunit 18 family. Component of the Mediator complex, which includes at least CDK8, MED4, MED6, MED11, MED14, MED17, MED18, MED20, MED21, MED22, MED27, MED28, MED30 and MED31.

It is found in the nucleus. In terms of biological role, component of the Mediator complex, a coactivator involved in the regulated transcription of nearly all RNA polymerase II-dependent genes. Mediator functions as a bridge to convey information from gene-specific regulatory proteins to the basal RNA polymerase II transcription machinery. Mediator is recruited to promoters by direct interactions with regulatory proteins and serves as a scaffold for the assembly of a functional preinitiation complex with RNA polymerase II and the general transcription factors. The polypeptide is Mediator of RNA polymerase II transcription subunit 18 (MED18) (Drosophila melanogaster (Fruit fly)).